Reading from the N-terminus, the 214-residue chain is Adenylate kinase (214 aa).

10–15 (GAGKGT) is a binding site for ATP. The NMP stretch occupies residues 30–59 (STGDMLRAAVKAGTELGKQAKEIMDAGKLV). AMP-binding positions include Thr31, Arg36, 57–59 (KLV), 85–88 (GFPR), and Gln92. The interval 122 to 159 (GRRVHAASGRVYHVKFNPPKVEGKDDVTGEDLTIRKDD) is LID. ATP-binding positions include Arg123 and 132–133 (VY). Positions 156 and 167 each coordinate AMP. Arg200 serves as a coordination point for ATP.

The protein belongs to the adenylate kinase family. In terms of assembly, monomer.

The protein localises to the cytoplasm. The catalysed reaction is AMP + ATP = 2 ADP. The protein operates within purine metabolism; AMP biosynthesis via salvage pathway; AMP from ADP: step 1/1. Functionally, catalyzes the reversible transfer of the terminal phosphate group between ATP and AMP. Plays an important role in cellular energy homeostasis and in adenine nucleotide metabolism. The sequence is that of Adenylate kinase from Pectobacterium carotovorum subsp. carotovorum (strain PC1).